Reading from the N-terminus, the 419-residue chain is uncharacterized protein (419 aa).

Residues Cys-38, Cys-44, Cys-47, and Cys-126 each coordinate [4Fe-4S] cluster. S-adenosyl-L-methionine-binding residues include Gln-250, Tyr-280, Glu-301, and Asp-346. Cys-373 acts as the Nucleophile in catalysis.

It belongs to the class I-like SAM-binding methyltransferase superfamily. RNA M5U methyltransferase family.

This is an uncharacterized protein from Prochlorococcus marinus (strain SARG / CCMP1375 / SS120).